A 131-amino-acid chain; its full sequence is MIYDTISDMLTRIRNAYLVKHETVYVLNTKINRKISEILKKEGYIESVNLSTNSLQKLEITLKYLGNQKKPGITNLKRLSWPGLRFYSNYKDIPPVLNGMGVVILSTSKGIMTDREARANKVGGELLCSIW.

It belongs to the universal ribosomal protein uS8 family. As to quaternary structure, part of the 30S ribosomal subunit.

Its subcellular location is the plastid. The protein localises to the chloroplast. Functionally, one of the primary rRNA binding proteins, it binds directly to 16S rRNA central domain where it helps coordinate assembly of the platform of the 30S subunit. The protein is Small ribosomal subunit protein uS8c (rps8) of Tupiella akineta (Green alga).